The chain runs to 415 residues: NADH-quinone oxidoreductase subunit D (415 aa).

Belongs to the complex I 49 kDa subunit family. As to quaternary structure, NDH-1 is composed of 14 different subunits. Subunits NuoB, C, D, E, F, and G constitute the peripheral sector of the complex.

Its subcellular location is the cell inner membrane. The enzyme catalyses a quinone + NADH + 5 H(+)(in) = a quinol + NAD(+) + 4 H(+)(out). NDH-1 shuttles electrons from NADH, via FMN and iron-sulfur (Fe-S) centers, to quinones in the respiratory chain. The immediate electron acceptor for the enzyme in this species is believed to be ubiquinone. Couples the redox reaction to proton translocation (for every two electrons transferred, four hydrogen ions are translocated across the cytoplasmic membrane), and thus conserves the redox energy in a proton gradient. This is NADH-quinone oxidoreductase subunit D from Myxococcus xanthus (strain DK1622).